Reading from the N-terminus, the 560-residue chain is Dihydroxy-acid dehydratase (560 aa).

The tract at residues 1–20 is disordered; that stretch reads MGDNLKKRSSMTTDGDNRAP. Cys52 provides a ligand contact to [2Fe-2S] cluster. Residue Asp84 coordinates Mg(2+). Cys125 contacts [2Fe-2S] cluster. Residues Asp126 and Lys127 each contribute to the Mg(2+) site. Lys127 carries the post-translational modification N6-carboxylysine. Cys197 contacts [2Fe-2S] cluster. Glu448 contributes to the Mg(2+) binding site. Ser474 acts as the Proton acceptor in catalysis.

Belongs to the IlvD/Edd family. Homodimer. [2Fe-2S] cluster is required as a cofactor. Mg(2+) serves as cofactor.

The catalysed reaction is (2R)-2,3-dihydroxy-3-methylbutanoate = 3-methyl-2-oxobutanoate + H2O. The enzyme catalyses (2R,3R)-2,3-dihydroxy-3-methylpentanoate = (S)-3-methyl-2-oxopentanoate + H2O. Its pathway is amino-acid biosynthesis; L-isoleucine biosynthesis; L-isoleucine from 2-oxobutanoate: step 3/4. The protein operates within amino-acid biosynthesis; L-valine biosynthesis; L-valine from pyruvate: step 3/4. In terms of biological role, functions in the biosynthesis of branched-chain amino acids. Catalyzes the dehydration of (2R,3R)-2,3-dihydroxy-3-methylpentanoate (2,3-dihydroxy-3-methylvalerate) into 2-oxo-3-methylpentanoate (2-oxo-3-methylvalerate) and of (2R)-2,3-dihydroxy-3-methylbutanoate (2,3-dihydroxyisovalerate) into 2-oxo-3-methylbutanoate (2-oxoisovalerate), the penultimate precursor to L-isoleucine and L-valine, respectively. The polypeptide is Dihydroxy-acid dehydratase (Leptospira interrogans serogroup Icterohaemorrhagiae serovar copenhageni (strain Fiocruz L1-130)).